A 423-amino-acid chain; its full sequence is Serine--tRNA ligase 1 (423 aa).

231–233 (TAE) is an L-serine binding site. ATP is bound at residue 262–264 (RSE). L-serine is bound at residue Glu285. Residue 349-352 (EISS) coordinates ATP. An L-serine-binding site is contributed by Ser384.

This sequence belongs to the class-II aminoacyl-tRNA synthetase family. Type-1 seryl-tRNA synthetase subfamily. Homodimer. The tRNA molecule binds across the dimer.

It localises to the cytoplasm. The catalysed reaction is tRNA(Ser) + L-serine + ATP = L-seryl-tRNA(Ser) + AMP + diphosphate + H(+). The enzyme catalyses tRNA(Sec) + L-serine + ATP = L-seryl-tRNA(Sec) + AMP + diphosphate + H(+). It participates in aminoacyl-tRNA biosynthesis; selenocysteinyl-tRNA(Sec) biosynthesis; L-seryl-tRNA(Sec) from L-serine and tRNA(Sec): step 1/1. Its function is as follows. Catalyzes the attachment of serine to tRNA(Ser). Is also able to aminoacylate tRNA(Sec) with serine, to form the misacylated tRNA L-seryl-tRNA(Sec), which will be further converted into selenocysteinyl-tRNA(Sec). This Enterococcus faecalis (strain ATCC 700802 / V583) protein is Serine--tRNA ligase 1.